The chain runs to 1111 residues: Kinesin-like protein KIP1 (1111 aa).

A compositionally biased stretch (polar residues) spans 1–11; that stretch reads MARSSLPNRRT. The segment at 1–34 is disordered; sequence MARSSLPNRRTAQFEANKRRTIAHAPSPSLSNGM. The Kinesin motor domain occupies 52-410; that stretch reads NIHVYVRCRS…LEYATRAKSI (359 aa). 141-148 is an ATP binding site; that stretch reads GQTGTGKT. 4 coiled-coil regions span residues 424-510, 648-670, 710-780, and 808-828; these read TCLK…IIQN, KDLNEIYQSHQQFLKNLQNDIKS, KLIK…DQDI, and HNAENTLKTVSQNNESFTNDL. Over residues 1007-1016 the composition is skewed to basic and acidic residues; it reads AENKSKDDTS. The segment at 1007 to 1111 is disordered; the sequence is AENKSKDDTS…DILQNKKLHQ (105 aa). Polar residues-rich tracts occupy residues 1017 to 1038 and 1057 to 1082; these read NSRTCIPNLSTNENFPLSQFSP and SINSAKSNRSKTLPNTEGTGRESQNN.

Belongs to the TRAFAC class myosin-kinesin ATPase superfamily. Kinesin family. BimC subfamily. Might be dimeric.

It localises to the cytoplasm. The protein resides in the cytoskeleton. It is found in the spindle. In terms of biological role, required for assembly of the mitotic spindle. Interacts with spindle microtubules to produce an outwardly directed force acting upon the poles. Following spindle assembly, CIN8 and KIP1 apparently act to oppose a force that draws separated poles back together. This force seems to be mediate by KAR3. This Saccharomyces cerevisiae (strain ATCC 204508 / S288c) (Baker's yeast) protein is Kinesin-like protein KIP1 (KIP1).